The chain runs to 456 residues: Phosphomethylpyrimidine synthase (456 aa).

Substrate contacts are provided by residues asparagine 80, methionine 109, tyrosine 139, histidine 175, 195–197 (SRG), 236–239 (DSLR), and glutamate 275. Residue histidine 279 coordinates Zn(2+). Tyrosine 302 contributes to the substrate binding site. Histidine 343 contacts Zn(2+). [4Fe-4S] cluster is bound by residues cysteine 423, cysteine 426, and cysteine 431.

This sequence belongs to the ThiC family. Requires [4Fe-4S] cluster as cofactor.

The catalysed reaction is 5-amino-1-(5-phospho-beta-D-ribosyl)imidazole + S-adenosyl-L-methionine = 4-amino-2-methyl-5-(phosphooxymethyl)pyrimidine + CO + 5'-deoxyadenosine + formate + L-methionine + 3 H(+). It participates in cofactor biosynthesis; thiamine diphosphate biosynthesis. Catalyzes the synthesis of the hydroxymethylpyrimidine phosphate (HMP-P) moiety of thiamine from aminoimidazole ribotide (AIR) in a radical S-adenosyl-L-methionine (SAM)-dependent reaction. This Prochlorococcus marinus (strain MIT 9215) protein is Phosphomethylpyrimidine synthase.